The chain runs to 337 residues: Phenylalanine--tRNA ligase alpha subunit (337 aa).

E252 contributes to the Mg(2+) binding site.

This sequence belongs to the class-II aminoacyl-tRNA synthetase family. Phe-tRNA synthetase alpha subunit type 1 subfamily. Tetramer of two alpha and two beta subunits. The cofactor is Mg(2+).

The protein localises to the cytoplasm. The enzyme catalyses tRNA(Phe) + L-phenylalanine + ATP = L-phenylalanyl-tRNA(Phe) + AMP + diphosphate + H(+). This chain is Phenylalanine--tRNA ligase alpha subunit, found in Francisella tularensis subsp. novicida (strain U112).